Consider the following 214-residue polypeptide: MIENLSKLISEKVSSELNYDNERKEIIQYGTYALIQTLISIISVFIIGLLFNIALEALIFLFTASILRKYSGGAHSESSNVCTLLGIIISICIGFLVKSSFFTKMNFEIIVFIGIVIFVFGYFIVFKFAPVDTKNKPIKTEKKKKRMKKGSLKILTIYLFIEILSIILYYNLGWSLVKSVMLSIILGVAWQCITLTYIGNILLKTIDSFTNKLL.

5 helical membrane passes run 41-61 (IISVFIIGLLFNIALEALIFL), 82-102 (CTLLGIIISICIGFLVKSSFF), 109-129 (IIVFIGIVIFVFGYFIVFKFA), 154-174 (ILTIYLFIEILSIILYYNLGW), and 182-202 (LSIILGVAWQCITLTYIGNIL).

The protein belongs to the AgrB family.

Its subcellular location is the cell membrane. In terms of biological role, may be involved in the proteolytic processing of a quorum sensing system signal molecule precursor. This Clostridium perfringens (strain SM101 / Type A) protein is Putative AgrB-like protein.